A 160-amino-acid polypeptide reads, in one-letter code: Cyanate hydratase (160 aa).

Active-site residues include Arg-100, Glu-103, and Ser-126.

It belongs to the cyanase family.

It catalyses the reaction cyanate + hydrogencarbonate + 3 H(+) = NH4(+) + 2 CO2. Its function is as follows. Catalyzes the reaction of cyanate with bicarbonate to produce ammonia and carbon dioxide. This chain is Cyanate hydratase, found in Penicillium rubens (strain ATCC 28089 / DSM 1075 / NRRL 1951 / Wisconsin 54-1255) (Penicillium chrysogenum).